A 115-amino-acid chain; its full sequence is U3-lycotoxin-Ls1r (115 aa).

A signal peptide spans 1 to 20 (MKFVLLFGVLLVTLFSYSSA). Residues 21 to 44 (EMLDDFHQADEDELVSLIKKEEAR) constitute a propeptide that is removed on maturation. Intrachain disulfides connect Cys-48–Cys-63, Cys-55–Cys-72, Cys-62–Cys-87, and Cys-74–Cys-85.

Belongs to the neurotoxin 19 (CSTX) family. 01 subfamily. As to expression, expressed by the venom gland.

It is found in the secreted. The sequence is that of U3-lycotoxin-Ls1r from Lycosa singoriensis (Wolf spider).